A 25-amino-acid chain; its full sequence is MREAICIHIGQAGYQIGNACSQLFC.

Gln-11 contributes to the GTP binding site.

Belongs to the tubulin family. In terms of assembly, dimer of alpha and beta chains. A typical microtubule is a hollow water-filled tube with an outer diameter of 25 nm and an inner diameter of 15 nM. Alpha-beta heterodimers associate head-to-tail to form protofilaments running lengthwise along the microtubule wall with the beta-tubulin subunit facing the microtubule plus end conferring a structural polarity. Microtubules usually have 13 protofilaments but different protofilament numbers can be found in some organisms and specialized cells. It depends on Mg(2+) as a cofactor.

The protein localises to the cytoplasm. The protein resides in the cytoskeleton. The enzyme catalyses GTP + H2O = GDP + phosphate + H(+). Its function is as follows. Tubulin is the major constituent of microtubules, a cylinder consisting of laterally associated linear protofilaments composed of alpha- and beta-tubulin heterodimers. Microtubules grow by the addition of GTP-tubulin dimers to the microtubule end, where a stabilizing cap forms. Below the cap, tubulin dimers are in GDP-bound state, owing to GTPase activity of alpha-tubulin. This chain is Tubulin alpha chain, found in Leptomonas seymouri.